Reading from the N-terminus, the 197-residue chain is 3-isopropylmalate dehydratase small subunit (197 aa).

This sequence belongs to the LeuD family. LeuD type 1 subfamily. In terms of assembly, heterodimer of LeuC and LeuD.

The catalysed reaction is (2R,3S)-3-isopropylmalate = (2S)-2-isopropylmalate. The protein operates within amino-acid biosynthesis; L-leucine biosynthesis; L-leucine from 3-methyl-2-oxobutanoate: step 2/4. Functionally, catalyzes the isomerization between 2-isopropylmalate and 3-isopropylmalate, via the formation of 2-isopropylmaleate. The polypeptide is 3-isopropylmalate dehydratase small subunit (Corynebacterium glutamicum (strain ATCC 13032 / DSM 20300 / JCM 1318 / BCRC 11384 / CCUG 27702 / LMG 3730 / NBRC 12168 / NCIMB 10025 / NRRL B-2784 / 534)).